We begin with the raw amino-acid sequence, 45 residues long: Photosystem II reaction center protein K (45 aa).

Residues 1 to 8 (MITAIIIA) constitute a propeptide that is removed on maturation. A helical membrane pass occupies residues 23 to 43 (ILPVIPIFFLLLAFVWQAAIG).

Belongs to the PsbK family. In terms of assembly, PSII is composed of 1 copy each of membrane proteins PsbA, PsbB, PsbC, PsbD, PsbE, PsbF, PsbH, PsbI, PsbJ, PsbK, PsbL, PsbM, PsbT, PsbX, PsbY, PsbZ, Psb30/Ycf12, at least 3 peripheral proteins of the oxygen-evolving complex and a large number of cofactors. It forms dimeric complexes.

It localises to the plastid. The protein resides in the chloroplast thylakoid membrane. One of the components of the core complex of photosystem II (PSII). PSII is a light-driven water:plastoquinone oxidoreductase that uses light energy to abstract electrons from H(2)O, generating O(2) and a proton gradient subsequently used for ATP formation. It consists of a core antenna complex that captures photons, and an electron transfer chain that converts photonic excitation into a charge separation. This is Photosystem II reaction center protein K from Gracilaria tenuistipitata var. liui (Red alga).